Here is a 3930-residue protein sequence, read N- to C-terminus: Hybrid PKS-NRPS synthetase apdA (3930 aa).

The 439-residue stretch at Q2–G440 folds into the Ketosynthase family 3 (KS3) domain. Catalysis depends on for beta-ketoacyl synthase activity residues C176, H313, and H361. The segment at I557–A879 is malonyl-CoA:ACP transacylase (MAT) domain. Residues H948–P1085 form an N-terminal hotdog fold region. The tract at residues H948 to P1251 is dehydratase (DH) domain. In terms of domain architecture, PKS/mFAS DH spans H948–E1252. The Proton acceptor; for dehydratase activity role is filled by H980. A C-terminal hotdog fold region spans residues N1100–E1252. D1159 serves as the catalytic Proton donor; for dehydratase activity. The segment at Q1389–D1588 is methyltransferase (MT) domain. The segment at A2088–A2229 is ketoreductase (KR) domain. Residues A2326–F2403 form the Carrier 1 domain. The residue at position 2363 (S2363) is an O-(pantetheine 4'-phosphoryl)serine. Disordered regions lie at residues V2414–T2433 and D2444–D2494. Residues A2445–S2473 show a composition bias toward low complexity. The tract at residues P2509–T2937 is condensation (C) domain. The adenylation (A) (KR) domain stretch occupies residues K2971–D3371. Residues K2971–D3371 form a reductase (RED) domain region. The 80-residue stretch at R3493 to K3572 folds into the Carrier 2 domain. S3532 is subject to O-(pantetheine 4'-phosphoryl)serine.

The protein in the C-terminal section; belongs to the NRP synthetase family.

Its pathway is secondary metabolite biosynthesis. Functionally, hybrid PKS-NRPS synthetase; part of the gene cluster that mediates the biosynthesis of aspyridones. The polyketide-amino acid backbone preaspyridone A is first assembled by the PKS-NRPS hybrid apdA. The assembly of preaspyridone A is initiated by loading of malonyl-CoA onto apdA, followed by decarboxylation to yield the acetyl starter unit. The growing polyketide chain then elongates into a tetraketide. The adpA PKS module catalyzes three Claisen condensations, as well as beta-keto processing and methylation. Alpha-methylation step during polyketide synthesis is a prerequisite and a key checkpoint for chain transfer between PKS and NRPS modules. The downstream NRPS module contains the condensation (C), adenylation (A), and thiolation (T) domains and catalyzes the incorporation of tyrosine via the formation of the L-tyrosinyl-thioester and the amide linkage between L-tyrosinyl-thioester and the tetraketide. The bimodular assembly line is terminated with a reductase (R) domain that facilitates formation and release of the tetramic acid product. Because apdA lacks a designated enoylreductase (ER) domain, the required activity is provided the enoyl reductase apdC. ApdC appears to operate with different stereoselectivity in different PKS cycle. Combined with apdC, apdA is proposed to synthesize preaspyridone A via about 20 enzymatic steps. A number of oxidative steps performed successively by the cytochrome P450 monooxygenases apdE and apdB are required for the conversion of preaspyridone A to aspyridone A. The cytochrome P450 monooxygenase apdE is responsible for the oxidative dephenylation of preaspyridone A. Finally, the predicted FAD-dependent monooxygenase apdD and the acyl-CoA dehydrogenase apdG may be involved in the transformation of aspyridone A into aspyridone B. In Emericella nidulans (strain FGSC A4 / ATCC 38163 / CBS 112.46 / NRRL 194 / M139) (Aspergillus nidulans), this protein is Hybrid PKS-NRPS synthetase apdA.